A 245-amino-acid polypeptide reads, in one-letter code: tRNA1(Val) (adenine(37)-N6)-methyltransferase (245 aa).

Belongs to the methyltransferase superfamily. tRNA (adenine-N(6)-)-methyltransferase family.

The protein resides in the cytoplasm. It catalyses the reaction adenosine(37) in tRNA1(Val) + S-adenosyl-L-methionine = N(6)-methyladenosine(37) in tRNA1(Val) + S-adenosyl-L-homocysteine + H(+). Its function is as follows. Specifically methylates the adenine in position 37 of tRNA(1)(Val) (anticodon cmo5UAC). This chain is tRNA1(Val) (adenine(37)-N6)-methyltransferase, found in Shigella boydii serotype 18 (strain CDC 3083-94 / BS512).